The primary structure comprises 393 residues: NAD(P)H-quinone oxidoreductase subunit H, chloroplastic (393 aa).

The protein belongs to the complex I 49 kDa subunit family. As to quaternary structure, NDH is composed of at least 16 different subunits, 5 of which are encoded in the nucleus.

It localises to the plastid. Its subcellular location is the chloroplast thylakoid membrane. The enzyme catalyses a plastoquinone + NADH + (n+1) H(+)(in) = a plastoquinol + NAD(+) + n H(+)(out). It catalyses the reaction a plastoquinone + NADPH + (n+1) H(+)(in) = a plastoquinol + NADP(+) + n H(+)(out). Its function is as follows. NDH shuttles electrons from NAD(P)H:plastoquinone, via FMN and iron-sulfur (Fe-S) centers, to quinones in the photosynthetic chain and possibly in a chloroplast respiratory chain. The immediate electron acceptor for the enzyme in this species is believed to be plastoquinone. Couples the redox reaction to proton translocation, and thus conserves the redox energy in a proton gradient. This is NAD(P)H-quinone oxidoreductase subunit H, chloroplastic from Populus alba (White poplar).